Here is a 186-residue protein sequence, read N- to C-terminus: Elongation factor P (186 aa).

It belongs to the elongation factor P family.

It localises to the cytoplasm. Its pathway is protein biosynthesis; polypeptide chain elongation. In terms of biological role, involved in peptide bond synthesis. Stimulates efficient translation and peptide-bond synthesis on native or reconstituted 70S ribosomes in vitro. Probably functions indirectly by altering the affinity of the ribosome for aminoacyl-tRNA, thus increasing their reactivity as acceptors for peptidyl transferase. The chain is Elongation factor P from Brucella canis (strain ATCC 23365 / NCTC 10854 / RM-666).